A 512-amino-acid polypeptide reads, in one-letter code: Keratin, type I cytoskeletal 24 (512 aa).

Positions M1 to G21 are disordered. The head stretch occupies residues M1–S140. The segment covering G8 to G21 has biased composition (low complexity). The interval E141 to W176 is coil 1A. The region spanning E141–C455 is the IF rod domain. Residues Y177–I197 are linker 1. Positions I198–M289 are coil 1B. The linker 12 stretch occupies residues Q290 to L312. The interval L313 to D451 is coil 2. The tail stretch occupies residues G452–K512.

It belongs to the intermediate filament family. In terms of assembly, heterotetramer of two type I and two type II keratins.

This is Keratin, type I cytoskeletal 24 (Krt24) from Mus musculus (Mouse).